Consider the following 113-residue polypeptide: Cysteine proteinase inhibitor 6 (113 aa).

The signal sequence occupies residues M1–A18. A Secondary area of contact motif is present at residues Q65 to G69.

It belongs to the cystatin family. Phytocystatin subfamily.

It localises to the secreted. Functionally, specific inhibitor of cysteine proteinases. Probably involved in the regulation of endogenous processes and in defense against pests and pathogens. This chain is Cysteine proteinase inhibitor 6, found in Oryza sativa subsp. japonica (Rice).